The sequence spans 457 residues: Transcription factor PCF7 (457 aa).

Residues 58–84 (STLHYLLQEKERAQQAHEQLQIYQQQQ) are a coiled coil. The tract at residues 95 to 119 (RQPASRGPGGGGGGGDGGGSSGEST) is disordered. Gly residues predominate over residues 101 to 115 (GPGGGGGGGDGGGSS). The region spanning 140–198 (RKDRHSKVCTARGLRDRRVRLAAHTAIRFYDVQDRLGYDRPSKAVDWLMRNAKAAIDEL) is the TCP domain. Disordered stretches follow at residues 199–231 (PDRAEAPPPPAAASTEQPEATEQATSTSYGFGN) and 263–299 (KSLFPSSSTASGAASAGHDEYRGSPPDLLSRTTSNQQ). Composition is skewed to low complexity over residues 210-225 (AASTEQPEATEQATST) and 268-278 (SSSTASGAASA).

In terms of assembly, forms homodimers and heterodimers.

The protein resides in the nucleus. In terms of biological role, transcription activator. Binds the promoter core sequence 5'-GGNCC-3'. This is Transcription factor PCF7 (PCF7) from Oryza sativa subsp. japonica (Rice).